We begin with the raw amino-acid sequence, 339 residues long: GTPase Era (339 aa).

The RPE1 insert domain maps to 4–48 (RHLAKFAYREEFKGDTEALAAAVREDASTGSTSQLPLEVQFGKMS). One can recognise an Era-type G domain in the interval 51-220 (KTVSVCIIGR…ITSKAKISPW (170 aa)). The G1 stretch occupies residues 59-66 (GRPNSGKS). 59 to 66 (GRPNSGKS) provides a ligand contact to GTP. The G2 stretch occupies residues 85 to 89 (QTTRS). Positions 106–109 (DTPG) are G3. GTP is bound by residues 106–110 (DTPGI) and 168–171 (NKID). Residues 168–171 (NKID) are G4. Residues 196–198 (ISA) are G5. The KH type-2 domain maps to 248 to 325 (LQKELPYKLT…HLFLFVKVRE (78 aa)).

This sequence belongs to the TRAFAC class TrmE-Era-EngA-EngB-Septin-like GTPase superfamily. Era GTPase family. Monomer.

It localises to the cytoplasm. Its subcellular location is the cell inner membrane. Functionally, an essential GTPase that binds both GDP and GTP, with rapid nucleotide exchange. Plays a role in 16S rRNA processing and 30S ribosomal subunit biogenesis and possibly also in cell cycle regulation and energy metabolism. The polypeptide is GTPase Era (Rickettsia conorii (strain ATCC VR-613 / Malish 7)).